Consider the following 325-residue polypeptide: UPF0285 protein MmarC6_0247 (325 aa).

It belongs to the UPF0285 family.

In Methanococcus maripaludis (strain C6 / ATCC BAA-1332), this protein is UPF0285 protein MmarC6_0247.